The chain runs to 1809 residues: Pyochelin synthetase PchF (1809 aa).

The tract at residues 69–490 (FPLTPVQAAY…GLLRRLAQSP (422 aa)) is condensation/cyclization. The interval 520–915 (FAERALLTPD…GREDDQVKIR (396 aa)) is adenylation. A Carrier domain is found at 1407 to 1488 (APADELENAL…GLAERLRSAP (82 aa)). An O-(pantetheine 4'-phosphoryl)serine modification is found at serine 1442. The tract at residues 1584–1797 (LGRRYAEALH…FDCLGEALAQ (214 aa)) is thioesterase.

The protein belongs to the NRP synthetase family. Pantetheine 4'-phosphate serves as cofactor.

It catalyses the reaction holo-[peptidyl-carrier protein] + L-cysteine + ATP = L-cysteinyl-[peptidyl-carrier protein] + AMP + diphosphate. Its pathway is siderophore biosynthesis. Involved in the biosynthesis of the siderophore pyochelin. Adenylates L-cysteine and loads it onto its peptidyl carrier domain via a thioester linkage to the phosphopanthetheine moiety. Then forms a peptide bond between the salicyl-thiazolinyl intermediate bound to the second carrier domain of PchE and the cysteine bound to its own peptidyl carrier domain to form the salicyl-thiazolinyl-cysteinyl-S-PCP2 intermediate. It subsequently cyclizes the C-terminal cysteine to form the second thiazoline heterocycle in the salicyl-thiazolinyl-thiazolinyl-S-PCP2 intermediate. When this intermediate is released by the action of a thioesterase, it produces the tricyclic acid hydroxyphenyl-thiazolyl-thiazolinyl-carboxylic acid (HPTT-COOH), an advanced intermediate containing the aryl-4,2-bis-heterocyclic skeleton of the bithiazoline class of siderophores. This Pseudomonas aeruginosa (strain ATCC 15692 / DSM 22644 / CIP 104116 / JCM 14847 / LMG 12228 / 1C / PRS 101 / PAO1) protein is Pyochelin synthetase PchF.